Here is a 439-residue protein sequence, read N- to C-terminus: ATP-dependent DNA helicase dda (439 aa).

32–39 (GPAGTGKT) is a binding site for ATP.

Monomer. Interacts with UvsX and gene 32 protein.

The enzyme catalyses Couples ATP hydrolysis with the unwinding of duplex DNA at the replication fork by translocating in the 5'-3' direction. This creates two antiparallel DNA single strands (ssDNA). The leading ssDNA polymer is the template for DNA polymerase III holoenzyme which synthesizes a continuous strand.. It catalyses the reaction ATP + H2O = ADP + phosphate + H(+). DNA helicase that stimulates viral DNA replication and recombination. Plays a role in T4 DNA replication initiation by selecting and activating DNA origins. Acts by dissociating and reassociating with the DNA molecule being unwound. Unwinds DNA as a monomer in a 5'-3' direction at a rate of 250 bp/s and can efficiently displace proteins from the DNA. This Enterobacteria phage T4 (Bacteriophage T4) protein is ATP-dependent DNA helicase dda (dda).